Here is a 100-residue protein sequence, read N- to C-terminus: Ferredoxin (100 aa).

Residues 1–8 constitute a propeptide that is removed on maturation; sequence MLSQVCRF. Residues 9 to 100 form the 2Fe-2S ferredoxin-type domain; it reads GTITAVKGGV…GENDGAVFEL (92 aa). [2Fe-2S] cluster contacts are provided by C46, C52, C55, and C85.

Requires [2Fe-2S] cluster as cofactor.

It localises to the hydrogenosome. Functionally, ferredoxins are iron-sulfur proteins that transfer electrons in a wide variety of metabolic reactions. It links pyruvate:ferredoxin oxidoreductase to hydrogenase. The polypeptide is Ferredoxin (Trichomonas vaginalis).